Consider the following 305-residue polypeptide: RxLR effector protein 17 (305 aa).

The N-terminal stretch at 1-24 is a signal peptide; that stretch reads MQSILWFALIASVVFLVLVDLASG. The RxLR-dEER signature appears at 45–60; that stretch reads RLLRAAHLDRKLSEER. N-linked (GlcNAc...) asparagine glycans are attached at residues N207 and N227. Residues 247-269 form a w motif region; sequence LHLKWAVEAKSPKDVVERILKDL.

This sequence belongs to the RxLR effector family. As to quaternary structure, interacts with host A.thaliana At1G14340.

It is found in the secreted. The protein resides in the host cell membrane. Secreted effector that confers enhanced plant susceptibility during both compatible and incompatible interactions between the pathogen and its host. Promotes the sexual reproduction of the pathogen in the plant host. This chain is RxLR effector protein 17, found in Hyaloperonospora arabidopsidis (strain Emoy2) (Downy mildew agent).